A 338-amino-acid polypeptide reads, in one-letter code: DNA-directed RNA polymerase subunit alpha (338 aa).

The interval 1–230 (MRKITTSAYM…QQMSVFKGIL (230 aa)) is alpha N-terminal domain (alpha-NTD). The segment at 247–338 (FSKLLSSVED…ELKSQMSAKE (92 aa)) is alpha C-terminal domain (alpha-CTD).

Belongs to the RNA polymerase alpha chain family. Homodimer. The RNAP catalytic core consists of 2 alpha, 1 beta, 1 beta' and 1 omega subunit. When a sigma factor is associated with the core the holoenzyme is formed, which can initiate transcription.

It catalyses the reaction RNA(n) + a ribonucleoside 5'-triphosphate = RNA(n+1) + diphosphate. DNA-dependent RNA polymerase catalyzes the transcription of DNA into RNA using the four ribonucleoside triphosphates as substrates. This chain is DNA-directed RNA polymerase subunit alpha, found in Campylobacter concisus (strain 13826).